The following is a 321-amino-acid chain: Arabinan endo-1,5-alpha-L-arabinosidase A (321 aa).

A signal peptide spans 1 to 19; sequence MYSLLTALSVPLLAGLAHG. Asp34 serves as the catalytic Proton acceptor. Residue Asn192 is glycosylated (N-linked (GlcNAc...) asparagine). Catalysis depends on Glu200, which acts as the Proton donor.

It belongs to the glycosyl hydrolase 43 family.

The protein resides in the secreted. It catalyses the reaction Endohydrolysis of (1-&gt;5)-alpha-arabinofuranosidic linkages in (1-&gt;5)-arabinans.. The protein operates within glycan metabolism; L-arabinan degradation. In terms of biological role, endo-1,5-alpha-L-arabinanase involved in degradation of pectin. Its preferred substrate is linear 1,5-alpha-L-arabinan. The protein is Arabinan endo-1,5-alpha-L-arabinosidase A (abnA) of Aspergillus aculeatus.